A 304-amino-acid chain; its full sequence is Porphobilinogen deaminase (304 aa).

At cysteine 240 the chain carries S-(dipyrrolylmethanemethyl)cysteine.

This sequence belongs to the HMBS family. In terms of assembly, monomer. Dipyrromethane serves as cofactor.

It catalyses the reaction 4 porphobilinogen + H2O = hydroxymethylbilane + 4 NH4(+). It functions in the pathway porphyrin-containing compound metabolism; protoporphyrin-IX biosynthesis; coproporphyrinogen-III from 5-aminolevulinate: step 2/4. In terms of biological role, tetrapolymerization of the monopyrrole PBG into the hydroxymethylbilane pre-uroporphyrinogen in several discrete steps. This is Porphobilinogen deaminase from Xanthomonas campestris pv. campestris (strain B100).